The sequence spans 331 residues: Hyaluronidase B (331 aa).

Cystine bridges form between Cys-19-Cys-308 and Cys-185-Cys-197. The N-linked (GlcNAc...) asparagine glycan is linked to Asn-79. Glu-109 serves as the catalytic Proton donor.

Belongs to the glycosyl hydrolase 56 family. As to expression, expressed by the venom gland.

It localises to the secreted. The enzyme catalyses Random hydrolysis of (1-&gt;4)-linkages between N-acetyl-beta-D-glucosamine and D-glucuronate residues in hyaluronate.. Functionally, hydrolyzes high molecular weight hyaluronic acid to produce small oligosaccharides. This Vespa velutina (Asian yellow-legged hornet) protein is Hyaluronidase B.